A 55-amino-acid polypeptide reads, in one-letter code: Large ribosomal subunit protein bL33 (55 aa).

Over residues 1–11 (MAKGGREKIKL) the composition is skewed to basic and acidic residues. The disordered stretch occupies residues 1-26 (MAKGGREKIKLESTAGTGHFYTTDKN).

It belongs to the bacterial ribosomal protein bL33 family.

The chain is Large ribosomal subunit protein bL33 from Methylibium petroleiphilum (strain ATCC BAA-1232 / LMG 22953 / PM1).